A 180-amino-acid polypeptide reads, in one-letter code: Bifunctional protein PyrR (180 aa).

The PRPP-binding signature appears at 101-113 (LIVVDDVLFTGRT).

The protein belongs to the purine/pyrimidine phosphoribosyltransferase family. PyrR subfamily. In terms of assembly, homodimer and homohexamer; in equilibrium.

The enzyme catalyses UMP + diphosphate = 5-phospho-alpha-D-ribose 1-diphosphate + uracil. Functionally, regulates transcriptional attenuation of the pyrimidine nucleotide (pyr) operon by binding in a uridine-dependent manner to specific sites on pyr mRNA. This disrupts an antiterminator hairpin in the RNA and favors formation of a downstream transcription terminator, leading to a reduced expression of downstream genes. Also displays a weak uracil phosphoribosyltransferase activity which is not physiologically significant. The polypeptide is Bifunctional protein PyrR (Bacillus pumilus (strain SAFR-032)).